The sequence spans 334 residues: tRNA N6-adenosine threonylcarbamoyltransferase (334 aa).

The Fe cation site is built by H112 and H116. Substrate is bound by residues 135–139 (VVSGG), D168, G181, D185, and N274. Residue D303 coordinates Fe cation.

The protein belongs to the KAE1 / TsaD family. Fe(2+) serves as cofactor.

Its subcellular location is the cytoplasm. It catalyses the reaction L-threonylcarbamoyladenylate + adenosine(37) in tRNA = N(6)-L-threonylcarbamoyladenosine(37) in tRNA + AMP + H(+). In terms of biological role, required for the formation of a threonylcarbamoyl group on adenosine at position 37 (t(6)A37) in tRNAs that read codons beginning with adenine. Is involved in the transfer of the threonylcarbamoyl moiety of threonylcarbamoyl-AMP (TC-AMP) to the N6 group of A37, together with TsaE and TsaB. TsaD likely plays a direct catalytic role in this reaction. The sequence is that of tRNA N6-adenosine threonylcarbamoyltransferase from Anaeromyxobacter dehalogenans (strain 2CP-1 / ATCC BAA-258).